Consider the following 318-residue polypeptide: ATP synthase gamma chain (318 aa).

This sequence belongs to the ATPase gamma chain family. As to quaternary structure, F-type ATPases have 2 components, CF(1) - the catalytic core - and CF(0) - the membrane proton channel. CF(1) has five subunits: alpha(3), beta(3), gamma(1), delta(1), epsilon(1). CF(0) has three main subunits: a, b and c.

It is found in the cell membrane. Its function is as follows. Produces ATP from ADP in the presence of a proton gradient across the membrane. The gamma chain is believed to be important in regulating ATPase activity and the flow of protons through the CF(0) complex. The protein is ATP synthase gamma chain of Lactobacillus johnsonii (strain CNCM I-12250 / La1 / NCC 533).